The primary structure comprises 119 residues: NADH-quinone oxidoreductase subunit A (119 aa).

The next 3 membrane-spanning stretches (helical) occupy residues 9–29 (VILFILVGVGVGVAPQVLGFL), 63–83 (LVAILFILFDLEIAFLFPWAV), and 88–108 (IGATGFWAMMIFLGILVVGFV).

The protein belongs to the complex I subunit 3 family. As to quaternary structure, NDH-1 is composed of 14 different subunits. Subunits NuoA, H, J, K, L, M, N constitute the membrane sector of the complex.

The protein localises to the cell inner membrane. It catalyses the reaction a quinone + NADH + 5 H(+)(in) = a quinol + NAD(+) + 4 H(+)(out). In terms of biological role, NDH-1 shuttles electrons from NADH, via FMN and iron-sulfur (Fe-S) centers, to quinones in the respiratory chain. The immediate electron acceptor for the enzyme in this species is believed to be ubiquinone. Couples the redox reaction to proton translocation (for every two electrons transferred, four hydrogen ions are translocated across the cytoplasmic membrane), and thus conserves the redox energy in a proton gradient. This is NADH-quinone oxidoreductase subunit A from Leptothrix cholodnii (strain ATCC 51168 / LMG 8142 / SP-6) (Leptothrix discophora (strain SP-6)).